We begin with the raw amino-acid sequence, 226 residues long: Ribonuclease 3 (226 aa).

The region spanning 7–129 (LPRLCRTLGY…IIGAVYLDSD (123 aa)) is the RNase III domain. Position 42 (Glu-42) interacts with Mg(2+). Asp-46 is an active-site residue. Mg(2+) is bound by residues Asp-115 and Glu-118. The active site involves Glu-118. Residues 156–226 (DAKTLLQEHL…AAQVLELLKK (71 aa)) enclose the DRBM domain.

This sequence belongs to the ribonuclease III family. Homodimer. The cofactor is Mg(2+).

The protein resides in the cytoplasm. It carries out the reaction Endonucleolytic cleavage to 5'-phosphomonoester.. In terms of biological role, digests double-stranded RNA. Involved in the processing of primary rRNA transcript to yield the immediate precursors to the large and small rRNAs (23S and 16S). Processes some mRNAs, and tRNAs when they are encoded in the rRNA operon. Processes pre-crRNA and tracrRNA of type II CRISPR loci if present in the organism. In Shewanella baltica (strain OS185), this protein is Ribonuclease 3.